The sequence spans 819 residues: Ion-translocating oxidoreductase complex subunit C (819 aa).

2 4Fe-4S ferredoxin-type domains span residues 368–398 (EYAE…QQLY) and 408–437 (KSEE…IQYF). [4Fe-4S] cluster contacts are provided by Cys378, Cys381, Cys384, Cys388, Cys417, Cys420, Cys423, and Cys427. Basic and acidic residues-rich tracts occupy residues 465–477 (QARM…ERKA) and 485–513 (ARRE…KANE). 3 disordered regions span residues 465-568 (QARM…NAKK), 580-677 (AKKL…TALD), and 692-793 (AKKL…PKKA). Polar residues-rich tracts occupy residues 554–565 (VENQEQQTQPTN) and 587–601 (NSTS…TAEN). Positions 602–614 (QVEKTKSAVEKTQ) are enriched in basic and acidic residues. Residues 641-656 (QTNSTSEAISNSQTAE) are compositionally biased toward polar residues. The segment covering 658 to 671 (EVEKTKSAVEKTEE) has biased composition (basic and acidic residues). Polar residues-rich tracts occupy residues 699-712 (NSAS…QTAE) and 755-768 (NSTS…QTAE). The segment covering 770-782 (EVEKTKSAVEKTQ) has biased composition (basic and acidic residues).

This sequence belongs to the 4Fe4S bacterial-type ferredoxin family. RnfC subfamily. As to quaternary structure, the complex is composed of six subunits: RnfA, RnfB, RnfC, RnfD, RnfE and RnfG. [4Fe-4S] cluster serves as cofactor.

Its subcellular location is the cell inner membrane. In terms of biological role, part of a membrane-bound complex that couples electron transfer with translocation of ions across the membrane. This is Ion-translocating oxidoreductase complex subunit C from Haemophilus influenzae (strain ATCC 51907 / DSM 11121 / KW20 / Rd).